We begin with the raw amino-acid sequence, 330 residues long: Biotin synthase (330 aa).

The 227-residue stretch at 42 to 268 (YYGRKVKLNM…INPSKEIRIA (227 aa)) folds into the Radical SAM core domain. Positions 60, 64, and 67 each coordinate [4Fe-4S] cluster. 4 residues coordinate [2Fe-2S] cluster: Cys-103, Cys-136, Cys-196, and Arg-266.

It belongs to the radical SAM superfamily. Biotin synthase family. Homodimer. It depends on [4Fe-4S] cluster as a cofactor. Requires [2Fe-2S] cluster as cofactor.

It catalyses the reaction (4R,5S)-dethiobiotin + (sulfur carrier)-SH + 2 reduced [2Fe-2S]-[ferredoxin] + 2 S-adenosyl-L-methionine = (sulfur carrier)-H + biotin + 2 5'-deoxyadenosine + 2 L-methionine + 2 oxidized [2Fe-2S]-[ferredoxin]. It functions in the pathway cofactor biosynthesis; biotin biosynthesis; biotin from 7,8-diaminononanoate: step 2/2. In terms of biological role, catalyzes the conversion of dethiobiotin (DTB) to biotin by the insertion of a sulfur atom into dethiobiotin via a radical-based mechanism. The polypeptide is Biotin synthase (Macrococcus caseolyticus (strain JCSC5402) (Macrococcoides caseolyticum)).